The chain runs to 154 residues: Prefoldin subunit 2 (154 aa).

Disordered regions lie at residues M1 to A20 and L126 to S154. Residues G9–K18 show a composition bias toward gly residues. Positions L126–S139 are enriched in basic and acidic residues. Residues G141–S154 show a composition bias toward low complexity.

It belongs to the prefoldin subunit beta family. As to quaternary structure, heterohexamer of two PFD-alpha type and four PFD-beta type subunits. Component of the PAQosome complex which is responsible for the biogenesis of several protein complexes and which consists of R2TP complex members RUVBL1, RUVBL2, RPAP3 and PIH1D1, URI complex members PFDN2, PFDN6, PDRG1, UXT and URI1 as well as ASDURF, POLR2E and DNAAF10/WDR92. Interacts with URI1; the interaction is phosphorylation-dependent and occurs in a growth-dependent manner.

Its subcellular location is the nucleus. It is found in the cytoplasm. It localises to the mitochondrion. In terms of biological role, binds specifically to cytosolic chaperonin (c-CPN) and transfers target proteins to it. Binds to nascent polypeptide chain and promotes folding in an environment in which there are many competing pathways for nonnative proteins. This chain is Prefoldin subunit 2 (Pfdn2), found in Rattus norvegicus (Rat).